The chain runs to 122 residues: MSITKDQIIEAVSAMSVMDVVELISAMEEKFGVSAAAAVAVAAAGPAEAAEEKTEFDVILKAAGANKVAVIKAVRGATGLGLKEAKDLVESAPAALKEGVSKDDAEALKKSLEEAGAEVEVK.

It belongs to the bacterial ribosomal protein bL12 family. Homodimer. Part of the ribosomal stalk of the 50S ribosomal subunit. Forms a multimeric L10(L12)X complex, where L10 forms an elongated spine to which 2 to 4 L12 dimers bind in a sequential fashion. Binds GTP-bound translation factors.

Functionally, forms part of the ribosomal stalk which helps the ribosome interact with GTP-bound translation factors. Is thus essential for accurate translation. The protein is Large ribosomal subunit protein bL12 of Cronobacter sakazakii (strain ATCC BAA-894) (Enterobacter sakazakii).